The chain runs to 518 residues: D-aminopeptidase (518 aa).

S62 acts as the Nucleophile in catalysis. K65 serves as the catalytic Proton donor/acceptor. An important for specificity region spans residues 477 to 487 (QRSMDAPSPGE). D481 lines the substrate pocket.

This sequence belongs to the peptidase S12 family. As to quaternary structure, homodimer.

The catalysed reaction is Release of an N-terminal D-amino acid from a peptide, Xaa-|-Yaa-, in which Xaa is preferably D-Ala, D-Ser or D-Thr. D-amino acid amides and methyl esters also are hydrolyzed, as is glycine amide.. Inhibited by beta-lactam compounds such as 6-aminopenicillic acid, 7-aminocephalosporanic acid, benzylpenicillin and ampicillin. Inhibited by p-chloromercuribenzoate. Functionally, hydrolyzes N-terminal residues in D-amino acid-containing peptides. In Brucella abortus (strain S19), this protein is D-aminopeptidase.